A 386-amino-acid chain; its full sequence is Succinyl-diaminopimelate desuccinylase (386 aa).

Histidine 75 is a binding site for Zn(2+). The active site involves aspartate 77. Zn(2+) is bound at residue aspartate 108. The active-site Proton acceptor is the glutamate 138. Zn(2+) is bound by residues glutamate 139, glutamate 167, and histidine 356.

Belongs to the peptidase M20A family. DapE subfamily. As to quaternary structure, homodimer. It depends on Zn(2+) as a cofactor. The cofactor is Co(2+).

It carries out the reaction N-succinyl-(2S,6S)-2,6-diaminopimelate + H2O = (2S,6S)-2,6-diaminopimelate + succinate. The protein operates within amino-acid biosynthesis; L-lysine biosynthesis via DAP pathway; LL-2,6-diaminopimelate from (S)-tetrahydrodipicolinate (succinylase route): step 3/3. Functionally, catalyzes the hydrolysis of N-succinyl-L,L-diaminopimelic acid (SDAP), forming succinate and LL-2,6-diaminopimelate (DAP), an intermediate involved in the bacterial biosynthesis of lysine and meso-diaminopimelic acid, an essential component of bacterial cell walls. The polypeptide is Succinyl-diaminopimelate desuccinylase (Caulobacter vibrioides (strain ATCC 19089 / CIP 103742 / CB 15) (Caulobacter crescentus)).